The chain runs to 424 residues: Adenylosuccinate synthetase (424 aa).

Residues 12-18 and 40-42 contribute to the GTP site; these read GDEGKGK and GHT. The Proton acceptor role is filled by Asp13. Mg(2+) is bound by residues Asp13 and Gly40. IMP-binding positions include 13-16, 38-41, Thr130, Arg144, Asn220, Thr235, and Arg299; these read DEGK and NAGH. Catalysis depends on His41, which acts as the Proton donor. Residue 295–301 coordinates substrate; that stretch reads VTTGRRR. GTP-binding positions include Arg301, 327–329, and 412–414; these read KLD and GTG.

Belongs to the adenylosuccinate synthetase family. Homodimer. It depends on Mg(2+) as a cofactor.

Its subcellular location is the cytoplasm. The enzyme catalyses IMP + L-aspartate + GTP = N(6)-(1,2-dicarboxyethyl)-AMP + GDP + phosphate + 2 H(+). Its pathway is purine metabolism; AMP biosynthesis via de novo pathway; AMP from IMP: step 1/2. Plays an important role in the de novo pathway and in the salvage pathway of purine nucleotide biosynthesis. Catalyzes the first committed step in the biosynthesis of AMP from IMP. This is Adenylosuccinate synthetase from Aspergillus fumigatus (strain CBS 144.89 / FGSC A1163 / CEA10) (Neosartorya fumigata).